Here is a 596-residue protein sequence, read N- to C-terminus: MKHIRNFSIIAHIDHGKSTLSDRLIQVCGGLSDREMDAQVLDSMDLERERGITIKAQSVTLEYKAKNGETYQLNFIDTPGHVDFSYEVSRSLAACEGALLVVDAGQGVEAQTLANCYTALDMNLDVVPILNKIDLPQADPERVAAEIEDIVGIDAMNAVRCSAKTGVGIDEVLEVIVEQIPPPEGDPEAPLQALIIDSWFDSYLGVVSLVRIKNGVLKKGDKFKVMSTGQNHTADRVGIFTPKQTDKTELKTGEVGFVIAGIKEIHGAPVGDTLTLAKHGAEKPLPGFKKVKPQVYAGVFPISTDEYENFRDALNKLSLNDASLFFEPESSSALGFGFRIGYLGLLHMEIIQERLEREYDLDLITTAPTVVYEVLLTSGETVYVDNPADLPAINNIEEMREPIVEANILVPKEYLGNVITLCIEKRGTQVNMVYHGNQVAVTYHLPMAEVVMDFFDRLKSTSRGYASLEYNFIRFDPADMVRLDILINGDRVDALAMIIHRSNIRHRGLALVEKMKELIPRQMFDIAIQAAVGSQIIARSTVKALRKDVTAKCYGGDVSRKKKLLNKQKEGKKRMKQVGNVEVPQEAFLAVLKLNE.

The tr-type G domain maps to 2–184 (KHIRNFSIIA…VIVEQIPPPE (183 aa)). Residues 14–19 (DHGKST) and 131–134 (NKID) each bind GTP.

Belongs to the TRAFAC class translation factor GTPase superfamily. Classic translation factor GTPase family. LepA subfamily.

The protein localises to the cell inner membrane. It catalyses the reaction GTP + H2O = GDP + phosphate + H(+). Required for accurate and efficient protein synthesis under certain stress conditions. May act as a fidelity factor of the translation reaction, by catalyzing a one-codon backward translocation of tRNAs on improperly translocated ribosomes. Back-translocation proceeds from a post-translocation (POST) complex to a pre-translocation (PRE) complex, thus giving elongation factor G a second chance to translocate the tRNAs correctly. Binds to ribosomes in a GTP-dependent manner. The sequence is that of Elongation factor 4 from Shewanella sp. (strain MR-7).